The chain runs to 204 residues: uncharacterized protein (204 aa).

The first 21 residues, 1–21 (MIKKFLLFAMLNIFLTNKAHS), serve as a signal peptide directing secretion.

This is an uncharacterized protein from Borreliella burgdorferi (strain ATCC 35210 / DSM 4680 / CIP 102532 / B31) (Borrelia burgdorferi).